Reading from the N-terminus, the 1005-residue chain is MNCTVGNNIYHTYINYFVNNIYNSLSRNINSKINKYYNYYKKSKIFKNIKFYFNLLTFESNYCCDSGQNKYLYDGYNSYYFINIPLQIKFNNLKSRFINYNIINIPKINQSGDIILNGYLRLPILYLQLATNNISYIFNEKITRTYFIKIKNNIYLYIYLYDDFITVYINSYKIKNDLFSMYNNVSFKNKYINFSKIDNVIYVMNLKNNNIKYHIFDKTININNFVNNTMFMDILSIVNKFLNLNLKKKFIQSSNNLINKSTNSVLKTIFRQFTKSVTIFDIEKYCDKLLYKKKIFRSFNIVLFKEHLLVNPVIHYTDQLNVLSYLTNKFKINIFGYSNSSNDKFKVSTNLRKIQSDYIGFINIVNTPDGDTCGLISKLANNTILDKFKLKLINCNNEYFENFTKIDITSKNLYNMTSNNFINIKKNSTFKVKQIEVFKNNEFKLINFDKNKTNKNLNVFNTLSITELIIPFLFNNDPCRGLMGSKMHTQALPLIYNEHPYVMTKYNHMNGLLFNKCITSLCEGIIVSVNNYKIIVMDDKNRYLHYYLYPFNVLDYNSFVSYKPIVWVGEKINIGKILALPSDLKHSEFTLGVNNLLNYSFYNGYEHEDAIVINKNLIIEDILTSISFDVYEEYLSINKLDYVELTLRHLLEYNRYNRYLINEVGVSSNQDYMLFGDILSTKIRYELSLSKNKKFFKVFKLIFKENKKLIVYTKPLTIKRGGEGRLIKYEILGYSKFRQLDAMYPEINVSYLTLRFFIFKIDRINIGDKLCGRHGNKGVVSKIVDNIDLPYTFRGLCPYSITSPIGALARINLGQFLEGSCGYFGLNFNCRIKAPINLYNYHLYSNMYLKNIFNSLNVYNNSYINFSIEKYLRDFKTGYQLKNFNLMLMPYFLKLMHTSKSKFQYRTVGKYSSLTQQPVKGKRVNGSQKFGEMEVWALESHGSAYTIRELGYIKTNVKYFKKFEHKGYKGSETFKVLTLELKNVLININRVDNYSYFNQKIKYNY.

Belongs to the RNA polymerase beta chain family. In plastids the minimal PEP RNA polymerase catalytic core is composed of four subunits: alpha, beta, beta', and beta''. When a (nuclear-encoded) sigma factor is associated with the core the holoenzyme is formed, which can initiate transcription (Potential).

It localises to the plastid. It is found in the apicoplast. It carries out the reaction RNA(n) + a ribonucleoside 5'-triphosphate = RNA(n+1) + diphosphate. Functionally, DNA-dependent RNA polymerase catalyzes the transcription of DNA into RNA using the four ribonucleoside triphosphates as substrates. The sequence is that of DNA-directed RNA polymerase subunit beta (rpoB) from Theileria parva (East coast fever infection agent).